Reading from the N-terminus, the 125-residue chain is Ribosome-binding factor A (125 aa).

The protein belongs to the RbfA family. Monomer. Binds 30S ribosomal subunits, but not 50S ribosomal subunits or 70S ribosomes.

It is found in the cytoplasm. One of several proteins that assist in the late maturation steps of the functional core of the 30S ribosomal subunit. Associates with free 30S ribosomal subunits (but not with 30S subunits that are part of 70S ribosomes or polysomes). Required for efficient processing of 16S rRNA. May interact with the 5'-terminal helix region of 16S rRNA. This chain is Ribosome-binding factor A, found in Chloroherpeton thalassium (strain ATCC 35110 / GB-78).